The chain runs to 626 residues: Leucine-rich repeat and fibronectin type-III domain-containing protein 3 (626 aa).

Positions 1 to 16 (MAVLPLLLCLLPLAPA) are cleaved as a signal peptide. Over 17–539 (SSPPQPATSS…PHAPFLGGTM (523 aa)) the chain is Extracellular. An LRRNT domain is found at 19-59 (PPQPATSSPCPRRCRCQTQSLPLSVLCPGAGLLFVPPSLDR). LRR repeat units lie at residues 84 to 105 (GLLHLSLSRNTIRHVAAGAFAD), 108 to 129 (ALRALHLDGNRLTSLGEGQLRG), 132 to 153 (NLRHLILSNNQLAALAAGALDD), 157 to 178 (TLEDLDLSYNNLEQLPWEALGR), 181 to 202 (NVNTLGLDHNLLASVPAGAFSR), and 205 to 226 (KLARLDMTSNRLTTIPPDPLFS). Residues 249-295 (NPLHCNCELVWLRRLAREDDLEACASPPALGGRYFWAVGEEEFVCEP) form the LRRCT domain. Positions 295–382 (PPVVTHRSPP…GEATAAVELT (88 aa)) constitute an Ig-like domain. The 88-residue stretch at 308–395 (PAGRPAALRC…PPPPQLANST (88 aa)) folds into the Fibronectin type-III 1 domain. A disulfide bridge connects residues Cys317 and Cys366. Asn339, Asn348, and Asn393 each carry an N-linked (GlcNAc...) asparagine glycan. The segment at 382-423 (TVGPPPPPQLANSTSCDPPRDGEPDALTPPSAASASAKVADT) is disordered. A compositionally biased stretch (low complexity) spans 406 to 423 (DALTPPSAASASAKVADT). The 99-residue stretch at 425 to 523 (APTDRGVQVT…GCARFSTEPA (99 aa)) folds into the Fibronectin type-III 2 domain. The helical transmembrane segment at 540–560 (IIALGGVIVASVLVFIFVLLL) threads the bilayer. Residues 561 to 626 (RYKVHGVQPP…WGPSHEPAGP (66 aa)) lie on the Cytoplasmic side of the membrane.

Belongs to the LRFN family. As to quaternary structure, can form heteromeric complexes with LRFN1, LRFN2, LRFN4 and LRFN5. Able to form homomeric complexes across cell junctions, between adjacent cells. Does not interact with DLG4. In terms of processing, N-glycosylated. As to expression, expressed in brain. Within brain, expressed in hippocampus, cerebellum, olfactory bulb and forebrain (at protein level).

Its subcellular location is the cell membrane. It is found in the cell projection. The protein localises to the axon. The protein resides in the dendrite. It localises to the synapse. Its subcellular location is the presynaptic cell membrane. It is found in the postsynaptic cell membrane. Cell adhesion molecule that mediates homophilic cell-cell adhesion in a Ca(2+)-independent manner. Promotes neurite outgrowth in hippocampal neurons. The polypeptide is Leucine-rich repeat and fibronectin type-III domain-containing protein 3 (Rattus norvegicus (Rat)).